The primary structure comprises 267 residues: MATKIFVLLALLALSVSTTTAVIIPQCSLAPNAIISQFLPPLTPVGFEHPALQAYRLQQALANSILQQPFAQLQQQSSAHLTVQTIAAQQQQQQFLPALSQLALANPVAYLQQQLLASNPLALVNNAAYQQQQLQQVLPMISQVAMANPAAYLQQQQLAYNPLVAANAAAYLRQQQLQQILPALSQLALVNPAAYLHTQLLPFNQLAVTNTAAYLQQQQLLRVNPVVAANPLCAAFLQPRQLLPFNQISLMNPAFSWQQPIVGSAIV.

The first 21 residues, 1 to 21 (MATKIFVLLALLALSVSTTTA), serve as a signal peptide directing secretion.

The protein belongs to the zein family.

Its function is as follows. Major seed storage prolamin. The protein is Kafirin PSKR2 of Sorghum bicolor (Sorghum).